A 637-amino-acid polypeptide reads, in one-letter code: Biosynthetic arginine decarboxylase (637 aa).

N6-(pyridoxal phosphate)lysine is present on Lys101. Substrate is bound at residue 286 to 296 (FDVGGGLAVDY).

This sequence belongs to the Orn/Lys/Arg decarboxylase class-II family. SpeA subfamily. Mg(2+) is required as a cofactor. It depends on pyridoxal 5'-phosphate as a cofactor.

It carries out the reaction L-arginine + H(+) = agmatine + CO2. It participates in amine and polyamine biosynthesis; agmatine biosynthesis; agmatine from L-arginine: step 1/1. Catalyzes the biosynthesis of agmatine from arginine. In Shewanella halifaxensis (strain HAW-EB4), this protein is Biosynthetic arginine decarboxylase.